Here is a 274-residue protein sequence, read N- to C-terminus: Protein RecA (274 aa).

Residue 43–50 (GPESSGKT) coordinates ATP.

The protein belongs to the RecA family.

It localises to the cytoplasm. Can catalyze the hydrolysis of ATP in the presence of single-stranded DNA, the ATP-dependent uptake of single-stranded DNA by duplex DNA, and the ATP-dependent hybridization of homologous single-stranded DNAs. It interacts with LexA causing its activation and leading to its autocatalytic cleavage. The polypeptide is Protein RecA (Neisseria mucosa).